Reading from the N-terminus, the 241-residue chain is Beta-nerve growth factor (241 aa).

A signal peptide spans 1–18 (MSMLFYTLITALLIGVQA). Positions 19-121 (EPYTDSNLPE…SFNRTHRSKR (103 aa)) are excised as a propeptide. N-linked (GlcNAc...) asparagine glycans are attached at residues Asn-69, Asn-114, and Asn-166. Disulfide bonds link Cys-136/Cys-201, Cys-179/Cys-229, and Cys-189/Cys-231.

It belongs to the NGF-beta family. In terms of assembly, homodimer. The homodimer interacts with a single NTRK1 chain. The homodimer interacts with a single NGFR chain. The NGF dimer interacts with a single SORCS2 chain (via extracellular domain). The NGF precursor (proNGF) binds to a receptor complex formed by SORT1 and NGFR, which leads to NGF endocytosis. Both mature NGF and the immature NGF precursor (proNGF) interact with SORCS2 and with the heterodimer formed by SORCS2 and NGFR (via extracellular domains). The NGF precursor (proNGF) has much higher affinity for SORCS2 than mature NGF. The NGF precursor (proNGF) has much higher affinity for SORT1 than mature NGF. Interacts with ADAM10 in a divalent cation-dependent manner. Interacts with SORCS3.

Its subcellular location is the secreted. The protein localises to the endosome lumen. Its function is as follows. Nerve growth factor is important for the development and maintenance of the sympathetic and sensory nervous systems. Extracellular ligand for the NTRK1 and NGFR receptors, activates cellular signaling cascades through those receptor tyrosine kinase to regulate neuronal proliferation, differentiation and survival. Inhibits metalloproteinase dependent proteolysis of platelet glycoprotein VI. This is Beta-nerve growth factor (NGF) from Mastomys natalensis (African soft-furred rat).